The sequence spans 692 residues: Elongation factor G (692 aa).

The region spanning 9–283 (DKLRNIGIMA…AVIDYLPSPL (275 aa)) is the tr-type G domain. GTP contacts are provided by residues 18-25 (AHIDAGKT), 82-86 (DTPGH), and 136-139 (NKMD).

The protein belongs to the TRAFAC class translation factor GTPase superfamily. Classic translation factor GTPase family. EF-G/EF-2 subfamily.

Its subcellular location is the cytoplasm. Its function is as follows. Catalyzes the GTP-dependent ribosomal translocation step during translation elongation. During this step, the ribosome changes from the pre-translocational (PRE) to the post-translocational (POST) state as the newly formed A-site-bound peptidyl-tRNA and P-site-bound deacylated tRNA move to the P and E sites, respectively. Catalyzes the coordinated movement of the two tRNA molecules, the mRNA and conformational changes in the ribosome. In Thermotoga maritima (strain ATCC 43589 / DSM 3109 / JCM 10099 / NBRC 100826 / MSB8), this protein is Elongation factor G (fusA).